The following is a 457-amino-acid chain: Adenylosuccinate synthetase isozyme 1 (457 aa).

Positions 1 to 24 are disordered; it reads MSGTRASNDRPPGTGGVKRGRLQQ. GTP contacts are provided by residues 42-48 and 70-72; these read GDEGKGK and GHT. Asp-43 (proton acceptor) is an active-site residue. Asp-43 and Gly-70 together coordinate Mg(2+). Asp-43 lines the substrate pocket. Residues 43 to 46, 68 to 71, Thr-163, Arg-177, Asn-256, Thr-271, and Arg-335 contribute to the IMP site; these read DEGK and NAGH. His-71 (proton donor) is an active-site residue. A substrate-binding site is contributed by 331 to 337; that stretch reads VTTGRKR. GTP-binding positions include Arg-337, 363-365, and 445-448; these read KLD and GVGK.

This sequence belongs to the adenylosuccinate synthetase family. In terms of assembly, homodimer. It depends on Mg(2+) as a cofactor. High levels in muscle.

The protein resides in the cytoplasm. It localises to the membrane. It carries out the reaction IMP + L-aspartate + GTP = N(6)-(1,2-dicarboxyethyl)-AMP + GDP + phosphate + 2 H(+). It functions in the pathway purine metabolism; AMP biosynthesis via de novo pathway; AMP from IMP: step 1/2. Its activity is regulated as follows. Weakly inhibited by AMP non-competitively to all substrates. Inhibited by IMP non-competitively with respect to GTP. Inhibited by fructose 1,6-bisphosphate competitively with respect to IMP. Its function is as follows. Component of the purine nucleotide cycle (PNC), which interconverts IMP and AMP to regulate the nucleotide levels in various tissues, and which contributes to glycolysis and ammoniagenesis. Catalyzes the first committed step in the biosynthesis of AMP from IMP. The protein is Adenylosuccinate synthetase isozyme 1 (Adss1) of Mus musculus (Mouse).